The primary structure comprises 375 residues: Antichymotrypsin-2 (375 aa).

It belongs to the serpin family. Hemolymph.

It is found in the secreted. The sequence is that of Antichymotrypsin-2 from Bombyx mori (Silk moth).